The primary structure comprises 233 residues: Large ribosomal subunit protein uL1 (233 aa).

Belongs to the universal ribosomal protein uL1 family. In terms of assembly, part of the 50S ribosomal subunit.

In terms of biological role, binds directly to 23S rRNA. The L1 stalk is quite mobile in the ribosome, and is involved in E site tRNA release. Its function is as follows. Protein L1 is also a translational repressor protein, it controls the translation of the L11 operon by binding to its mRNA. This is Large ribosomal subunit protein uL1 from Buchnera aphidicola subsp. Baizongia pistaciae (strain Bp).